The sequence spans 429 residues: tRNA threonylcarbamoyladenosine dehydratase 1 (429 aa).

2 helical membrane-spanning segments follow: residues 3-23 and 74-94; these read NNTW…TQLA and EQYI…TMLI. Ser-259 is modified (phosphoserine). The chain crosses the membrane as a helical span at residues 279 to 299; sequence LPELGTMPGIFGLSIATWILT.

This sequence belongs to the HesA/MoeB/ThiF family.

The protein localises to the mitochondrion outer membrane. In terms of biological role, catalyzes the ATP-dependent dehydration of threonylcarbamoyladenosine at position 37 (t(6)A37) to form cyclic t(6)A37 (ct(6)A37) in tRNAs that read codons beginning with adenine. This Saccharomyces cerevisiae (strain ATCC 204508 / S288c) (Baker's yeast) protein is tRNA threonylcarbamoyladenosine dehydratase 1 (TCD1).